The chain runs to 156 residues: Arginine repressor (156 aa).

Belongs to the ArgR family.

The protein localises to the cytoplasm. It functions in the pathway amino-acid biosynthesis; L-arginine biosynthesis [regulation]. In terms of biological role, regulates arginine biosynthesis genes. The chain is Arginine repressor from Shigella boydii serotype 18 (strain CDC 3083-94 / BS512).